A 694-amino-acid polypeptide reads, in one-letter code: GRB2-associated-binding protein 1 (694 aa).

Ser2 bears the N-acetylserine mark. The PH domain occupies 5–116 (EVVCSGWLRK…WVRCICDICG (112 aa)). Disordered regions lie at residues 122–164 (EDPV…PYQL) and 194–231 (PEPT…SKHG). A compositionally biased stretch (polar residues) spans 145 to 157 (APPSTQADSSSAT). A compositionally biased stretch (basic and acidic residues) spans 194–203 (PEPTRTHADS). A compositionally biased stretch (polar residues) spans 204–231 (AKSTSSETDCNDNVPSHKNPASSQSKHG). 4 positions are modified to phosphoserine: Ser251, Ser253, Ser266, and Ser304. The interval 323-386 (FPEGTLGQTS…TAGMSPSRSN (64 aa)) is disordered. Residues 362–386 (IPRTASDTDSSYCIPTAGMSPSRSN) show a composition bias toward polar residues. Thr387 carries the post-translational modification Phosphothreonine. A phosphoserine mark is found at Ser402 and Ser454. 2 disordered regions span residues 493–532 (AHMG…VKPA) and 544–656 (ELQA…ADER). The residue at position 547 (Ala547) is a Phosphoserine. The segment covering 594–611 (PNLSSEDPNLFGSNSLDG) has biased composition (polar residues). Tyr627 bears the Phosphotyrosine mark. Residue Thr638 is modified to Phosphothreonine. Ser651 carries the post-translational modification Phosphoserine. Phosphotyrosine is present on Tyr659. The interval 671–694 (KSTREAWTDGRQSTESETPAKSVK) is disordered. The segment covering 672 to 684 (STREAWTDGRQST) has biased composition (basic and acidic residues). Ser683 carries the phosphoserine modification. A compositionally biased stretch (polar residues) spans 685–694 (ESETPAKSVK).

This sequence belongs to the GAB family. In terms of assembly, identified in a complex containing FRS2, GRB2, GAB1, PIK3R1 and SOS1. Forms a tripartite complex containing GAB1, METTL13 and SPRY2. Within the complex interacts with METTL13. Interacts with GRB2 and with other SH2-containing proteins. Interacts with phosphorylated LAT2. Interacts with PTPRJ. Interacts (phosphorylated) with PTPN11. Interacts with HCK. In terms of processing, phosphorylated in response to FGFR1 activation. Phosphorylated on tyrosine residue(s) by the epidermal growth factor receptor (EGFR) and the insulin receptor (INSR). Tyrosine phosphorylation of GAB1 mediates interaction with several proteins that contain SH2 domains. Phosphorylated on tyrosine residues by HCK upon IL6 signaling.

Adapter protein that plays a role in intracellular signaling cascades triggered by activated receptor-type kinases. Plays a role in FGFR1 signaling. Probably involved in signaling by the epidermal growth factor receptor (EGFR) and the insulin receptor (INSR). Involved in the MET/HGF-signaling pathway. This is GRB2-associated-binding protein 1 (GAB1) from Homo sapiens (Human).